The primary structure comprises 368 residues: Hydrophobic dipeptide epimerase (368 aa).

Substrate is bound by residues Thr143 and 168-170 (KIK). The Mg(2+) site is built by Asp197, Glu225, and Asp253. Residues Lys277 and 329–331 (DMD) each bind substrate.

It belongs to the mandelate racemase/muconate lactonizing enzyme family. Requires Mg(2+) as cofactor.

Its function is as follows. Catalyzes the epimerization of various hydrophobic dipeptides, such as L-Ala-L-Phe. Has epimerase activity with L-Ala-L-Thr, L-Ala-L-Met, L-Ala-L-Tyr, as well as L-Phe-L-Met, L-Phe-L-Ser and L-Phe-L-Thr (in vitro). In Citrifermentans bemidjiense (strain ATCC BAA-1014 / DSM 16622 / JCM 12645 / Bem) (Geobacter bemidjiensis), this protein is Hydrophobic dipeptide epimerase.